We begin with the raw amino-acid sequence, 337 residues long: Ferredoxin--NADP reductase (337 aa).

FAD contacts are provided by Asp35, Gln43, Tyr48, Ala88, Phe122, Asp289, and Thr330.

This sequence belongs to the ferredoxin--NADP reductase type 2 family. As to quaternary structure, homodimer. The cofactor is FAD.

The catalysed reaction is 2 reduced [2Fe-2S]-[ferredoxin] + NADP(+) + H(+) = 2 oxidized [2Fe-2S]-[ferredoxin] + NADPH. The protein is Ferredoxin--NADP reductase of Ehrlichia ruminantium (strain Gardel).